A 196-amino-acid chain; its full sequence is UMP-CMP kinase (196 aa).

13–18 (GAGKGT) is an ATP binding site. S33 carries the phosphoserine modification. The NMP stretch occupies residues 33–63 (SAGELLRDERKNPDSQYGELIEKYIKDGKIV). R39 contacts a ribonucleoside 5'-phosphate. K43 and K55 each carry N6-acetyllysine. Residues 61-63 (KIV) and 93-96 (GFPR) each bind a ribonucleoside 5'-phosphate. CMP is bound at residue N100. K106 bears the N6-succinyllysine mark. The LID stretch occupies residues 133-143 (ERGKSSGRSDD). R134 provides a ligand contact to ATP. A ribonucleoside 5'-phosphate-binding residues include R140 and R151. K179 lines the ATP pocket. S180 is subject to Phosphoserine.

Belongs to the adenylate kinase family. UMP-CMP kinase subfamily. As to quaternary structure, monomer. The cofactor is Mg(2+).

The protein resides in the nucleus. It localises to the cytoplasm. It carries out the reaction CMP + ATP = CDP + ADP. The enzyme catalyses dCMP + ATP = dCDP + ADP. It catalyses the reaction UMP + ATP = UDP + ADP. The catalysed reaction is a 2'-deoxyribonucleoside 5'-diphosphate + ATP = a 2'-deoxyribonucleoside 5'-triphosphate + ADP. It carries out the reaction a ribonucleoside 5'-diphosphate + ATP = a ribonucleoside 5'-triphosphate + ADP. Its function is as follows. Catalyzes the phosphorylation of pyrimidine nucleoside monophosphates at the expense of ATP. Plays an important role in de novo pyrimidine nucleotide biosynthesis. Has preference for UMP and CMP as phosphate acceptors. Also displays broad nucleoside diphosphate kinase activity. The polypeptide is UMP-CMP kinase (Sus scrofa (Pig)).